We begin with the raw amino-acid sequence, 288 residues long: Solute carrier family 25 member 47-B (288 aa).

3 Solcar repeats span residues 1–83 (MHLA…ILQF), 99–191 (AHIF…ICEI), and 199–286 (PGWP…VVRL). The next 6 helical transmembrane spans lie at 3 to 23 (LADF…GYPL), 58 to 75 (GMSM…LVFG), 101 to 121 (IFLA…PADI), 175 to 195 (GPSF…LTTE), 199 to 219 (PGWP…WAVG), and 257 to 277 (VLFR…MSVF).

It belongs to the mitochondrial carrier (TC 2.A.29) family.

The protein resides in the mitochondrion inner membrane. In Danio rerio (Zebrafish), this protein is Solute carrier family 25 member 47-B (slc25a47b).